The following is a 462-amino-acid chain: Arginine biosynthesis bifunctional protein ArgJ, mitochondrial (462 aa).

Substrate contacts are provided by T189, K215, T236, E327, N457, and S462. The Nucleophile role is filled by T236.

The protein belongs to the ArgJ family. In terms of assembly, heterodimer of an alpha and a beta chain. The alpha and beta chains are autoproteolytically processed from a single precursor protein within the mitochondrion.

It localises to the mitochondrion matrix. The enzyme catalyses N(2)-acetyl-L-ornithine + L-glutamate = N-acetyl-L-glutamate + L-ornithine. It catalyses the reaction L-glutamate + acetyl-CoA = N-acetyl-L-glutamate + CoA + H(+). It functions in the pathway amino-acid biosynthesis; L-arginine biosynthesis; L-ornithine and N-acetyl-L-glutamate from L-glutamate and N(2)-acetyl-L-ornithine (cyclic): step 1/1. Its pathway is amino-acid biosynthesis; L-arginine biosynthesis; N(2)-acetyl-L-ornithine from L-glutamate: step 1/4. Its function is as follows. Catalyzes two activities which are involved in the cyclic version of arginine biosynthesis: the synthesis of acetylglutamate from glutamate and acetyl-CoA, and of ornithine by transacetylation between acetylornithine and glutamate. This is Arginine biosynthesis bifunctional protein ArgJ, mitochondrial from Postia placenta (strain ATCC 44394 / Madison 698-R) (Brown rot fungus).